Reading from the N-terminus, the 224-residue chain is Phosphoribosylformylglycinamidine synthase subunit PurQ (224 aa).

The Glutamine amidotransferase type-1 domain occupies 3 to 224 (FGVVVFPGSN…GLLEKVVALA (222 aa)). Cys86 serves as the catalytic Nucleophile. Residues His195 and Glu197 contribute to the active site.

In terms of assembly, part of the FGAM synthase complex composed of 1 PurL, 1 PurQ and 2 PurS subunits.

The protein localises to the cytoplasm. It catalyses the reaction N(2)-formyl-N(1)-(5-phospho-beta-D-ribosyl)glycinamide + L-glutamine + ATP + H2O = 2-formamido-N(1)-(5-O-phospho-beta-D-ribosyl)acetamidine + L-glutamate + ADP + phosphate + H(+). The enzyme catalyses L-glutamine + H2O = L-glutamate + NH4(+). Its pathway is purine metabolism; IMP biosynthesis via de novo pathway; 5-amino-1-(5-phospho-D-ribosyl)imidazole from N(2)-formyl-N(1)-(5-phospho-D-ribosyl)glycinamide: step 1/2. Functionally, part of the phosphoribosylformylglycinamidine synthase complex involved in the purines biosynthetic pathway. Catalyzes the ATP-dependent conversion of formylglycinamide ribonucleotide (FGAR) and glutamine to yield formylglycinamidine ribonucleotide (FGAM) and glutamate. The FGAM synthase complex is composed of three subunits. PurQ produces an ammonia molecule by converting glutamine to glutamate. PurL transfers the ammonia molecule to FGAR to form FGAM in an ATP-dependent manner. PurS interacts with PurQ and PurL and is thought to assist in the transfer of the ammonia molecule from PurQ to PurL. This Trichormus variabilis (strain ATCC 29413 / PCC 7937) (Anabaena variabilis) protein is Phosphoribosylformylglycinamidine synthase subunit PurQ.